Reading from the N-terminus, the 154-residue chain is 6,7-dimethyl-8-ribityllumazine synthase (154 aa).

5-amino-6-(D-ribitylamino)uracil is bound by residues Phe21, 55-57 (AFE), and 79-81 (CVI). 84-85 (AT) provides a ligand contact to (2S)-2-hydroxy-3-oxobutyl phosphate. Catalysis depends on His87, which acts as the Proton donor. Phe112 contributes to the 5-amino-6-(D-ribitylamino)uracil binding site. Residue Arg126 participates in (2S)-2-hydroxy-3-oxobutyl phosphate binding.

The protein belongs to the DMRL synthase family. In terms of assembly, forms an icosahedral capsid composed of 60 subunits, arranged as a dodecamer of pentamers.

It catalyses the reaction (2S)-2-hydroxy-3-oxobutyl phosphate + 5-amino-6-(D-ribitylamino)uracil = 6,7-dimethyl-8-(1-D-ribityl)lumazine + phosphate + 2 H2O + H(+). Its pathway is cofactor biosynthesis; riboflavin biosynthesis; riboflavin from 2-hydroxy-3-oxobutyl phosphate and 5-amino-6-(D-ribitylamino)uracil: step 1/2. Functionally, catalyzes the formation of 6,7-dimethyl-8-ribityllumazine by condensation of 5-amino-6-(D-ribitylamino)uracil with 3,4-dihydroxy-2-butanone 4-phosphate. This is the penultimate step in the biosynthesis of riboflavin. The polypeptide is 6,7-dimethyl-8-ribityllumazine synthase (Staphylococcus aureus (strain Newman)).